The chain runs to 149 residues: SsrA-binding protein (149 aa).

Belongs to the SmpB family.

It is found in the cytoplasm. Its function is as follows. Required for rescue of stalled ribosomes mediated by trans-translation. Binds to transfer-messenger RNA (tmRNA), required for stable association of tmRNA with ribosomes. tmRNA and SmpB together mimic tRNA shape, replacing the anticodon stem-loop with SmpB. tmRNA is encoded by the ssrA gene; the 2 termini fold to resemble tRNA(Ala) and it encodes a 'tag peptide', a short internal open reading frame. During trans-translation Ala-aminoacylated tmRNA acts like a tRNA, entering the A-site of stalled ribosomes, displacing the stalled mRNA. The ribosome then switches to translate the ORF on the tmRNA; the nascent peptide is terminated with the 'tag peptide' encoded by the tmRNA and targeted for degradation. The ribosome is freed to recommence translation, which seems to be the essential function of trans-translation. The protein is SsrA-binding protein of Anaplasma phagocytophilum (strain HZ).